Consider the following 146-residue polypeptide: MNINATDNSLSTPLHHAINLLKTDIVSLLMQYKADASIRDSKGITPFCYAMYLGYYGVNKDILNIITRYNSINGTTRDINDVYTILLNNKKKNYVFVNLHDAARLGYVYILKKIIYNGKNINRIDEYYYSALHYAVKSSNLKAVNF.

ANK repeat units lie at residues 9 to 38 (SLST…DASI), 42 to 79 (KGIT…TRDI), 94 to 126 (YVFV…RIDE), and 127 to 145 (YYYS…KAVN).

The chain is Putative ankyrin repeat protein FPV224 from Fowlpox virus (strain NVSL) (FPV).